Reading from the N-terminus, the 62-residue chain is Photosystem II reaction center protein Z (62 aa).

Transmembrane regions (helical) follow at residues 8-28 (ALFALVAISFILVVGVPVILA) and 41-61 (FSGASLWIFLVFVVGILNSFI).

It belongs to the PsbZ family. PSII is composed of 1 copy each of membrane proteins PsbA, PsbB, PsbC, PsbD, PsbE, PsbF, PsbH, PsbI, PsbJ, PsbK, PsbL, PsbM, PsbT, PsbY, PsbZ, Psb30/Ycf12, at least 3 peripheral proteins of the oxygen-evolving complex and a large number of cofactors. It forms dimeric complexes.

Its subcellular location is the plastid. It is found in the chloroplast thylakoid membrane. In terms of biological role, may control the interaction of photosystem II (PSII) cores with the light-harvesting antenna, regulates electron flow through the 2 photosystem reaction centers. PSII is a light-driven water plastoquinone oxidoreductase, using light energy to abstract electrons from H(2)O, generating a proton gradient subsequently used for ATP formation. This chain is Photosystem II reaction center protein Z, found in Chara vulgaris (Common stonewort).